The following is a 434-amino-acid chain: Ribosomal protein uS12 methylthiotransferase RimO (434 aa).

Residues 9 to 125 (PAIFLLSLGC…VLAAIGAKYR (117 aa)) form the MTTase N-terminal domain. Cys-18, Cys-54, Cys-88, Cys-149, Cys-153, and Cys-156 together coordinate [4Fe-4S] cluster. Positions 135-364 (LTPPHYAFLK…MELQEGISAS (230 aa)) constitute a Radical SAM core domain. The 68-residue stretch at 367–434 (RKLEGQTLKV…AYELFGRISG (68 aa)) folds into the TRAM domain.

Belongs to the methylthiotransferase family. RimO subfamily. It depends on [4Fe-4S] cluster as a cofactor.

The protein resides in the cytoplasm. It catalyses the reaction L-aspartate(89)-[ribosomal protein uS12]-hydrogen + (sulfur carrier)-SH + AH2 + 2 S-adenosyl-L-methionine = 3-methylsulfanyl-L-aspartate(89)-[ribosomal protein uS12]-hydrogen + (sulfur carrier)-H + 5'-deoxyadenosine + L-methionine + A + S-adenosyl-L-homocysteine + 2 H(+). Catalyzes the methylthiolation of an aspartic acid residue of ribosomal protein uS12. This chain is Ribosomal protein uS12 methylthiotransferase RimO, found in Chlorobaculum tepidum (strain ATCC 49652 / DSM 12025 / NBRC 103806 / TLS) (Chlorobium tepidum).